A 103-amino-acid polypeptide reads, in one-letter code: Large ribosomal subunit protein uL23 (103 aa).

Belongs to the universal ribosomal protein uL23 family. Part of the 50S ribosomal subunit. Contacts protein L29, and trigger factor when it is bound to the ribosome.

In terms of biological role, one of the early assembly proteins it binds 23S rRNA. One of the proteins that surrounds the polypeptide exit tunnel on the outside of the ribosome. Forms the main docking site for trigger factor binding to the ribosome. The sequence is that of Large ribosomal subunit protein uL23 from Chlorobium chlorochromatii (strain CaD3).